The sequence spans 196 residues: MKKMMILSALALFSSSLFAANLTLQKEITPQIVNGEGVTLQEVHNGNRIELKPGHNQIAVTIGQIVFEDGKRRKFDSQPLLLEFVAKPEQALTLKYGKFRTIDDAKKFENNPTVHLTDAQGNPVAFTMVQLYKGGLQGFRDYEREVADYNAQKAQKADSAPLVNHDPKAMDLKTAFKEMTRQEQQAFMQWAMQNLK.

The signal sequence occupies residues 1-19 (MKKMMILSALALFSSSLFA).

The protein belongs to the UPF0319 family.

The sequence is that of UPF0319 protein VV1_0237 from Vibrio vulnificus (strain CMCP6).